The sequence spans 591 residues: Paxillin (591 aa).

N-acetylmethionine is present on Met-1. Residues 3-15 (DLDALLADLESTT) carry the LD motif 1 motif. The interval 17–139 (HISKRPVFLS…SPTVMSSSLG (123 aa)) is disordered. At Tyr-31 the chain carries Phosphotyrosine; by PTK6. The span at 45-54 (VPPPVPPPPS) shows a compositional bias: pro residues. Ser-83 is subject to Phosphoserine. Tyr-88 carries the post-translational modification Phosphotyrosine. Low complexity predominate over residues 89 to 99 (SSSAKNSSASN). Ser-106 carries the phosphoserine modification. At Tyr-118 the chain carries Phosphotyrosine; by PTK6. Phosphoserine occurs at positions 119, 126, and 130. The span at 121–137 (PNKQKSAEPSPTVMSSS) shows a compositional bias: polar residues. Residue Thr-132 is modified to Phosphothreonine. Phosphoserine occurs at positions 137, 140, and 143. The short motif at 144-156 (ELDRLLLELNAVQ) is the LD motif 2 element. A disordered region spans residues 156-261 (QHSPPGFPAD…QQQTRISASS (106 aa)). Position 181 is a phosphotyrosine (Tyr-181). The LD motif 3 motif lies at 216-228 (SVESLLDELESSV). Ser-230 bears the Phosphoserine mark. The span at 236–261 (TVNQGEMSSPQRVTSSQQQTRISASS) shows a compositional bias: polar residues. Ser-244 bears the Phosphoserine; by CDK5 mark. A phosphoserine mark is found at Ser-250, Ser-258, Ser-261, Ser-272, Ser-303, Ser-322, Ser-332, and Ser-340. The segment at 262–315 (ATRELDELMASLSDFKMQGLEQRVDGERPWAAGWPPSSRQSSPEGQDEGGFMAQ) is required for binding to PARVA and ILK. The LD motif 4 motif lies at 265–276 (ELDELMASLSDF). Residues 289–338 (RPWAAGWPPSSRQSSPEGQDEGGFMAQGKTGSSSPPGGLSKPGSQLDSML) are disordered. Positions 315–334 (QGKTGSSSPPGGLSKPGSQL) are enriched in low complexity. Positions 333 to 345 (QLDSMLGSLQSDL) match the LD motif 5 motif. LIM zinc-binding domains are found at residues 356 to 415 (GVCG…LFSP), 416 to 473 (RCYY…DMFA), 474 to 533 (PKCG…RRGS), and 534 to 591 (LCSG…KLFC). Ser-533 carries the post-translational modification Phosphoserine.

The protein belongs to the paxillin family. In terms of assembly, interacts in vitro with VCL/vinculin as well as to the SH3 domain of SRC and, when tyrosine phosphorylated, to the SH2 domain of CRK. Interacts with GIT1. Interacts with NUDT16L1/SDOS. Interacts with PTK2/FAK1. Interacts with PTK2B/PYK2. Interacts with ASAP2. Interacts with unphosphorylated ITGA4. Interacts with RNF5. Interacts with PDCD10. Interacts with NEK3, the interaction is prolactin-dependent. Interacts with PTK6. Interacts with TGFB1I1. Interacts with SORBS1. Interacts with PARVB. Interacts (via LD motif 4) with PARVA/PARVIN. Interacts (via LD motif 4) with ILK. Interacts (via cytoplasmic domain) with CEACAM1; the interaction is phosphotyrosyl-dependent. Interacts with LIMA1; this complex stabilizes actin dynamics. Interacts with CD36 (via C-terminus). Interacts with TRIM15. Interacts with PAK4; PAK4 acts as a scaffold to suppport PAXI phosphorylation at Ser-272. Phosphorylated by MAPK1/ERK2. Phosphorylated on tyrosine residues during integrin-mediated cell adhesion, embryonic development, fibroblast transformation and following stimulation of cells by mitogens. Phosphorylation at Ser-244 by CDK5 reduces its interaction with PTK2/FAK1 in matrix-cell focal adhesions (MCFA) during oligodendrocytes (OLs) differentiation. Phosphorylation at Tyr-31 and Tyr-118 by PTK6 promote the activation of RAC1 via CRK/CrKII, thereby promoting migration and invasion. Phosphorylation at Ser-250 by SLK is required for PXN redistribution and cell motility. Phosphorylation at Ser-272 promotes focal adhesion disassembly during cell migration.

Its subcellular location is the cytoplasm. The protein resides in the cytoskeleton. It localises to the cell junction. It is found in the focal adhesion. The protein localises to the cell cortex. In terms of biological role, cytoskeletal protein involved in actin-membrane attachment at sites of cell adhesion to the extracellular matrix (focal adhesion). Recruits other proteins such as TRIM15 to focal adhesion. This Mus musculus (Mouse) protein is Paxillin.